A 472-amino-acid polypeptide reads, in one-letter code: MQENISVTDSYSTGNAAQAMLEKLLQIYDVKTLVAQLNGVGENHWSAAILKRALANDSAWHRLSEKEFAHLQTLLPKPPAHHPHYAFRFIDLFAGIGGIRRGFESIGGQCVFTSEWNKHAVRTYKANHYCDPATHHFNEDIRDITLSHKEGVSDEAAAEHIRQHIPEHDVLLAGFPCQPFSLAGVSKKNSLGRAHGFACDTQGTLFFDVVRIIDARRPAMFVLENVKNLKSHDQGKTFRIIMQTLDELGYDVADAEDNGPDDPKIIDGKHFLPQHRERIVLVGFRRDLNLKADFTLRDISECFPAQRVTLAQLLDPMVEAKYILTPVLWKYLYRYAKKHQARGNGFGYGMVYPNNPQSVTRTLSARYYKDGAEILIDRGWDMATGEKDFDDPLNQQHRPRRLTPRECARLMGFEAPGEAKFRIPVSDTQAYRQFGNSVVVPVFAAVAKLLEPKIKQAVALRQQEAQHGRRSR.

Residues 87–457 form the SAM-dependent MTase C5-type domain; sequence FRFIDLFAGI…KLLEPKIKQA (371 aa). The active site involves Cys-177.

This sequence belongs to the class I-like SAM-binding methyltransferase superfamily. C5-methyltransferase family.

It catalyses the reaction a 2'-deoxycytidine in DNA + S-adenosyl-L-methionine = a 5-methyl-2'-deoxycytidine in DNA + S-adenosyl-L-homocysteine + H(+). Functionally, this methylase recognizes the double-stranded sequence 5'-CCWGG-3', methylates C-2 on both strands. This chain is DNA-cytosine methyltransferase (dcm), found in Escherichia coli O157:H7.